The chain runs to 121 residues: uncharacterized protein (121 aa).

A disordered region spans residues 100–121; that stretch reads KSFSNTKDGKKNDDDNNSSSKS.

This is an uncharacterized protein from Mycoplasma pneumoniae (strain ATCC 29342 / M129 / Subtype 1) (Mycoplasmoides pneumoniae).